Here is a 364-residue protein sequence, read N- to C-terminus: Histidinol-phosphate aminotransferase (364 aa).

At K226 the chain carries N6-(pyridoxal phosphate)lysine.

It belongs to the class-II pyridoxal-phosphate-dependent aminotransferase family. Histidinol-phosphate aminotransferase subfamily. As to quaternary structure, homodimer. Pyridoxal 5'-phosphate is required as a cofactor.

The enzyme catalyses L-histidinol phosphate + 2-oxoglutarate = 3-(imidazol-4-yl)-2-oxopropyl phosphate + L-glutamate. It functions in the pathway amino-acid biosynthesis; L-histidine biosynthesis; L-histidine from 5-phospho-alpha-D-ribose 1-diphosphate: step 7/9. This is Histidinol-phosphate aminotransferase from Campylobacter jejuni subsp. jejuni serotype O:23/36 (strain 81-176).